The primary structure comprises 349 residues: Dihydroorotate dehydrogenase (quinone) (349 aa).

Residues 59–63 (PGFDK) and T83 contribute to the FMN site. K63 is a binding site for substrate. 108-112 (NRMGF) serves as a coordination point for substrate. FMN contacts are provided by N142 and N173. N173 provides a ligand contact to substrate. Catalysis depends on S176, which acts as the Nucleophile. A substrate-binding site is contributed by N178. Residues K212 and S240 each coordinate FMN. Residue 241–242 (NT) coordinates substrate. FMN is bound by residues G262, G291, and 312–313 (YS).

It belongs to the dihydroorotate dehydrogenase family. Type 2 subfamily. Monomer. It depends on FMN as a cofactor.

It is found in the cell membrane. It carries out the reaction (S)-dihydroorotate + a quinone = orotate + a quinol. It participates in pyrimidine metabolism; UMP biosynthesis via de novo pathway; orotate from (S)-dihydroorotate (quinone route): step 1/1. Its function is as follows. Catalyzes the conversion of dihydroorotate to orotate with quinone as electron acceptor. This is Dihydroorotate dehydrogenase (quinone) from Novosphingobium aromaticivorans (strain ATCC 700278 / DSM 12444 / CCUG 56034 / CIP 105152 / NBRC 16084 / F199).